The sequence spans 270 residues: Methionine-rich protein (270 aa).

The N-terminal stretch at 1-18 (MLSLWAIGLLGLLNQVEA) is a signal peptide. Positions 31–52 (QRSAQFSSSGWGTSPAAQNPWS) are enriched in polar residues. Positions 31-95 (QRSAQFSSSG…MPGSMPGAMP (65 aa)) are disordered. The span at 56-95 (PMPNTNMPNMNTGSLPGSMPGAMPGSMPGAMPGSMPGAMP) shows a compositional bias: low complexity.

As to expression, component of the acid-soluble organic matrix of calcified layers of the shell (at protein level).

The protein localises to the secreted. This Lottia gigantea (Giant owl limpet) protein is Methionine-rich protein.